A 72-amino-acid polypeptide reads, in one-letter code: Translation initiation factor IF-1 (72 aa).

Residues 1 to 72 (MAKEDTIQMQ…TRARIVFRAR (72 aa)) form the S1-like domain.

This sequence belongs to the IF-1 family. Component of the 30S ribosomal translation pre-initiation complex which assembles on the 30S ribosome in the order IF-2 and IF-3, IF-1 and N-formylmethionyl-tRNA(fMet); mRNA recruitment can occur at any time during PIC assembly.

It is found in the cytoplasm. Its function is as follows. One of the essential components for the initiation of protein synthesis. Stabilizes the binding of IF-2 and IF-3 on the 30S subunit to which N-formylmethionyl-tRNA(fMet) subsequently binds. Helps modulate mRNA selection, yielding the 30S pre-initiation complex (PIC). Upon addition of the 50S ribosomal subunit IF-1, IF-2 and IF-3 are released leaving the mature 70S translation initiation complex. This chain is Translation initiation factor IF-1, found in Neisseria gonorrhoeae (strain ATCC 700825 / FA 1090).